A 493-amino-acid polypeptide reads, in one-letter code: Poly(ribitol-phosphate) alpha-N-acetylglucosaminyltransferase (493 aa).

Residues Gly17, Lys59, His249, Arg326, Lys331, Thr383, and 403–411 (EGQGLSMIE) each bind UDP-N-acetyl-alpha-D-glucosamine.

This sequence belongs to the glycosyltransferase group 1 family. Homotrimer.

The protein resides in the cytoplasm. It catalyses the reaction 4-O-[(D-ribitylphospho)(n)-di{(2R)-glycerylphospho}]-N-acetyl-beta-D-mannosaminyl-(1-&gt;4)-N-acetyl-alpha-D-glucosaminyl di-trans,octa-cis-undecaprenyl diphosphate + n UDP-N-acetyl-alpha-D-glucosamine = 4-O-([2-N-acetyl-alpha-D-glucosaminyl-1-D-ribitylphospho](n)-di{[2R]-1-glycerylphospho})-N-acetyl-beta-D-mannosaminyl-(1-&gt;4)-N-acetyl-alpha-D-glucosaminyl di-trans,octa-cis-undecaprenyl diphosphate + n UDP + n H(+). Its pathway is cell wall biogenesis; poly(ribitol phosphate) teichoic acid biosynthesis. In terms of biological role, attaches N-acetyl-alpha-D-glucosamine residues to poly(RboP)-wall teichoic acids (WTAs). The polypeptide is Poly(ribitol-phosphate) alpha-N-acetylglucosaminyltransferase (Staphylococcus aureus (strain COL)).